Here is a 285-residue protein sequence, read N- to C-terminus: Avenin-like b1 (285 aa).

The signal sequence occupies residues methionine 1–alanine 18.

It belongs to the prolamin family. In terms of processing, contains disulfide bonds.

Seed storage protein. Might be integrated via inter-chain disulfide bonds within the glutenin polymer. In Triticum aestivum (Wheat), this protein is Avenin-like b1 (AVNLB).